Consider the following 234-residue polypeptide: Large ribosomal subunit protein uL1 (234 aa).

It belongs to the universal ribosomal protein uL1 family. Part of the 50S ribosomal subunit.

In terms of biological role, binds directly to 23S rRNA. The L1 stalk is quite mobile in the ribosome, and is involved in E site tRNA release. Its function is as follows. Protein L1 is also a translational repressor protein, it controls the translation of the L11 operon by binding to its mRNA. This Desulfosudis oleivorans (strain DSM 6200 / JCM 39069 / Hxd3) (Desulfococcus oleovorans) protein is Large ribosomal subunit protein uL1.